Here is a 691-residue protein sequence, read N- to C-terminus: 1,4-alpha-glucan-branching enzyme (691 aa).

(1,4-alpha-D-glucosyl)n contacts are provided by W80 and K116. D333 serves as the catalytic Nucleophile. Catalysis depends on E398, which acts as the Proton donor.

Belongs to the glycosyl hydrolase 13 family. GlgB subfamily.

It localises to the cytoplasm. The catalysed reaction is Transfers a segment of a (1-&gt;4)-alpha-D-glucan chain to a primary hydroxy group in a similar glucan chain.. Its pathway is glycan biosynthesis; glycogen biosynthesis. In terms of biological role, glycogen-branching enzyme participates in the glycogen biosynthetic process along with glycogenin and glycogen synthase. Generates alpha-1,6-glucosidic branches from alpha-1,4-linked glucose chains, to increase solubility of the glycogen polymer. The chain is 1,4-alpha-glucan-branching enzyme (GLC3) from Yarrowia lipolytica (strain CLIB 122 / E 150) (Yeast).